Consider the following 183-residue polypeptide: Dual-action ribosomal maturation protein DarP (183 aa).

The protein belongs to the DarP family.

It localises to the cytoplasm. Member of a network of 50S ribosomal subunit biogenesis factors which assembles along the 30S-50S interface, preventing incorrect 23S rRNA structures from forming. Promotes peptidyl transferase center (PTC) maturation. In Salmonella gallinarum (strain 287/91 / NCTC 13346), this protein is Dual-action ribosomal maturation protein DarP.